A 397-amino-acid chain; its full sequence is N(6)-adenosine-methyltransferase non-catalytic subunit METTL14 (397 aa).

Disordered stretches follow at residues 37 to 67 and 368 to 397; these read NAED…KKTP and ELLR…GRPR. The segment covering 40-51 has biased composition (polar residues); that stretch reads DINSSRQLNSGG. The span at 382-397 shows a compositional bias: basic residues; it reads LRGRGRGFPRGRGRPR.

This sequence belongs to the MT-A70-like family. In terms of assembly, component of the WMM complex, a N6-methyltransferase complex composed of a catalytic subcomplex, named MAC, and of an associated subcomplex, named MACOM. The MAC subcomplex is composed of Ime4/Mettl3 and Mettl14. The MACOM subcomplex is composed of fl(2)d, Flacc/Xio, Hakai, vir, and, in some cases of nito.

It localises to the nucleus. Functionally, non-catalytic component of the WMM complex, a complex that mediates N6-methyladenosine (m6A) methylation of mRNAs, a modification that plays a role in the efficiency of mRNA splicing and is required for sex determination. In the heterodimer formed with Ime4/Mettl3, Mettl14 constitutes the RNA-binding scaffold that recognizes the substrate rather than the catalytic core. Required for sex determination and dosage compensation via Sxl alternative splicing: m6A methylation acts as a key regulator of Sxl pre-mRNA and promotes female-specific alternative splicing of Sxl, which determines female physiognomy. M6A methylation is also required for neuronal functions. This Drosophila melanogaster (Fruit fly) protein is N(6)-adenosine-methyltransferase non-catalytic subunit METTL14.